The sequence spans 338 residues: tRNA N6-adenosine threonylcarbamoyltransferase (338 aa).

Fe cation contacts are provided by H110 and H114. Substrate is bound by residues 132-136 (VLSGG), D165, G178, and N274. D298 is a binding site for Fe cation.

Belongs to the KAE1 / TsaD family. Fe(2+) is required as a cofactor.

The protein resides in the cytoplasm. The catalysed reaction is L-threonylcarbamoyladenylate + adenosine(37) in tRNA = N(6)-L-threonylcarbamoyladenosine(37) in tRNA + AMP + H(+). In terms of biological role, required for the formation of a threonylcarbamoyl group on adenosine at position 37 (t(6)A37) in tRNAs that read codons beginning with adenine. Is involved in the transfer of the threonylcarbamoyl moiety of threonylcarbamoyl-AMP (TC-AMP) to the N6 group of A37, together with TsaE and TsaB. TsaD likely plays a direct catalytic role in this reaction. The protein is tRNA N6-adenosine threonylcarbamoyltransferase of Borrelia recurrentis (strain A1).